The following is a 142-amino-acid chain: Transcriptional regulator MraZ (142 aa).

SpoVT-AbrB domains lie at 5 to 46 (THPV…DRSE) and 75 to 118 (AAAQ…DSEA).

Belongs to the MraZ family. In terms of assembly, forms oligomers.

The protein localises to the cytoplasm. Its subcellular location is the nucleoid. This is Transcriptional regulator MraZ from Tropheryma whipplei (strain TW08/27) (Whipple's bacillus).